Consider the following 188-residue polypeptide: Protein GrpE 2 (188 aa).

This sequence belongs to the GrpE family. As to quaternary structure, homodimer.

The protein localises to the cytoplasm. Functionally, participates actively in the response to hyperosmotic and heat shock by preventing the aggregation of stress-denatured proteins, in association with DnaK and GrpE. It is the nucleotide exchange factor for DnaK and may function as a thermosensor. Unfolded proteins bind initially to DnaJ; upon interaction with the DnaJ-bound protein, DnaK hydrolyzes its bound ATP, resulting in the formation of a stable complex. GrpE releases ADP from DnaK; ATP binding to DnaK triggers the release of the substrate protein, thus completing the reaction cycle. Several rounds of ATP-dependent interactions between DnaJ, DnaK and GrpE are required for fully efficient folding. This chain is Protein GrpE 2, found in Buchnera aphidicola subsp. Acyrthosiphon pisum (strain APS) (Acyrthosiphon pisum symbiotic bacterium).